The sequence spans 1040 residues: FHF complex subunit HOOK-interacting protein 1A (1040 aa).

3 disordered regions span residues 555 to 613, 653 to 746, and 769 to 808; these read PQQL…PIDP, SEDM…AAHP, and LMEQ…EDEE. Residues 653 to 664 are compositionally biased toward basic and acidic residues; that stretch reads SEDMKDSQEEAA. Residues 677–690 show a composition bias toward polar residues; that stretch reads VPINNGPLLSTQPE. Composition is skewed to basic and acidic residues over residues 696 to 719 and 783 to 804; these read EWNR…REPE and TKEE…KKEL.

The protein belongs to the FHIP family. As to quaternary structure, may be a component of the FTS/Hook/FHIP complex (FHF complex), composed of AKTIP/FTS, FHIP1B, and one or more members of the Hook family of proteins HOOK1, HOOK2, and HOOK3. May interact directly with AKTIP/FTS.

In terms of biological role, probable component of the FTS/Hook/FHIP complex (FHF complex). FHF complex promotes the distribution of AP-4 complex to the perinuclear area of the cell. The protein is FHF complex subunit HOOK-interacting protein 1A of Homo sapiens (Human).